Here is a 388-residue protein sequence, read N- to C-terminus: Processive diacylglycerol beta-glucosyltransferase (388 aa).

This sequence belongs to the glycosyltransferase 28 family. UgtP subfamily.

The protein localises to the cell membrane. It catalyses the reaction a 1,2-diacyl-3-O-(beta-D-glucopyranosyl)-sn-glycerol + UDP-alpha-D-glucose = a 1,2-diacyl-3-O-(beta-D-Glc-(1-&gt;6)-beta-D-Glc)-sn-glycerol + UDP + H(+). It carries out the reaction a 1,2-diacyl-3-O-(beta-D-Glc-(1-&gt;6)-beta-D-Glc)-sn-glycerol + UDP-alpha-D-glucose = a 1,2-diacyl-3-O-(beta-D-Glc-(1-&gt;6)-beta-D-Glc-(1-&gt;6)-beta-D-Glc)-sn-glycerol + UDP + H(+). The catalysed reaction is a 1,2-diacyl-sn-glycerol + UDP-alpha-D-glucose = a 1,2-diacyl-3-O-(beta-D-glucopyranosyl)-sn-glycerol + UDP + H(+). It participates in glycolipid metabolism; diglucosyl-diacylglycerol biosynthesis. In terms of biological role, processive glucosyltransferase involved in the biosynthesis of both the bilayer- and non-bilayer-forming membrane glucolipids. Is able to successively transfer up to three glucosyl residues to diacylglycerol (DAG), thereby catalyzing the formation of beta-monoglucosyl-DAG (3-O-(beta-D-glucopyranosyl)-1,2-diacyl-sn-glycerol), beta-diglucosyl-DAG (3-O-(beta-D-glucopyranosyl-beta-(1-&gt;6)-D-glucopyranosyl)-1,2-diacyl-sn-glycerol) and beta-triglucosyl-DAG (3-O-(beta-D-glucopyranosyl-beta-(1-&gt;6)-D-glucopyranosyl-beta-(1-&gt;6)-D-glucopyranosyl)-1,2-diacyl-sn-glycerol). Beta-diglucosyl-DAG is the predominant glycolipid found in Bacillales and is also used as a membrane anchor for lipoteichoic acid (LTA). This chain is Processive diacylglycerol beta-glucosyltransferase, found in Bacillus cereus (strain 03BB102).